The following is a 165-amino-acid chain: MNREKLMKMANTVRTGGKGTVRRKKKAVHKTTTTDDKRLQSTLKRVGVNSIPAIEEVNIFKDDVVIQFINPKVQASIAANTWVVSGTPQTKKLQDILPQIISQLGPDNLDNLKKLAEQFQKQAPGAGDVPATIQEEDDDDDVPDLVVGETFETPATEEAPKAAAS.

The region spanning 33–97 is the NAC-A/B domain; that stretch reads TTDDKRLQST…PQTKKLQDIL (65 aa). The segment at 120 to 165 is disordered; that stretch reads QKQAPGAGDVPATIQEEDDDDDVPDLVVGETFETPATEEAPKAAAS. A compositionally biased stretch (acidic residues) spans 134–143; it reads QEEDDDDDVP. The span at 144–165 shows a compositional bias: low complexity; it reads DLVVGETFETPATEEAPKAAAS.

This sequence belongs to the NAC-beta family. Part of the nascent polypeptide-associated complex (NAC).

This chain is Nascent polypeptide-associated complex subunit beta, found in Arabidopsis thaliana (Mouse-ear cress).